The chain runs to 154 residues: 3-hydroxyacyl-[acyl-carrier-protein] dehydratase FabZ (154 aa).

Histidine 54 is an active-site residue.

It belongs to the thioester dehydratase family. FabZ subfamily.

It localises to the cytoplasm. The enzyme catalyses a (3R)-hydroxyacyl-[ACP] = a (2E)-enoyl-[ACP] + H2O. Involved in unsaturated fatty acids biosynthesis. Catalyzes the dehydration of short chain beta-hydroxyacyl-ACPs and long chain saturated and unsaturated beta-hydroxyacyl-ACPs. This is 3-hydroxyacyl-[acyl-carrier-protein] dehydratase FabZ from Shewanella putrefaciens (strain CN-32 / ATCC BAA-453).